The following is a 429-amino-acid chain: Cell cycle protein kinase spo4 (429 aa).

The 363-residue stretch at Y40–F402 folds into the Protein kinase domain. Residues V46–V54 and K95 contribute to the ATP site. D182 (proton acceptor) is an active-site residue. T264 is subject to Phosphothreonine.

It belongs to the protein kinase superfamily. Ser/Thr protein kinase family. CDC7 subfamily. In terms of assembly, interacts with spo6.

The protein resides in the nucleus. It carries out the reaction L-seryl-[protein] + ATP = O-phospho-L-seryl-[protein] + ADP + H(+). It catalyses the reaction L-threonyl-[protein] + ATP = O-phospho-L-threonyl-[protein] + ADP + H(+). In terms of biological role, required for the initiation of meiosis II and progression through anaphase II. The polypeptide is Cell cycle protein kinase spo4 (spo4) (Schizosaccharomyces pombe (strain 972 / ATCC 24843) (Fission yeast)).